Here is a 478-residue protein sequence, read N- to C-terminus: Sialidase-4 (478 aa).

The FRIP motif signature appears at 22-25; the sequence is YRVP. Positions 23 and 43 each coordinate substrate. Residues D47 and D48 each act as proton acceptor in the active site. The BNR 1 repeat unit spans residues 127–138; the sequence is VTSCDAGLTWGS. Substrate-binding residues include Y177 and Y179. A BNR 2 repeat occupies 200 to 211; that stretch reads FYSDDHGISWHC. Substrate is bound by residues E222 and R238. Residues 247–258 form a BNR 3 repeat; sequence ALSADEGTSFLP. 2 disordered regions span residues 285 to 307 and 335 to 359; these read IEPQ…CFNL and SRSP…PECP. R383 is a binding site for substrate. The active-site Nucleophile is Y413. The active site involves E434.

This sequence belongs to the glycosyl hydrolase 33 family. Highly expressed in brain, particularly in hippocampus, and at lower levels in liver and spleen. Expressed in hippocampal neurons (at protein level).

It localises to the cell membrane. It is found in the endoplasmic reticulum membrane. The protein localises to the microsome membrane. Its subcellular location is the mitochondrion inner membrane. The protein resides in the mitochondrion outer membrane. It localises to the cell projection. It is found in the neuron projection. The protein localises to the lysosome lumen. It catalyses the reaction Hydrolysis of alpha-(2-&gt;3)-, alpha-(2-&gt;6)-, alpha-(2-&gt;8)- glycosidic linkages of terminal sialic acid residues in oligosaccharides, glycoproteins, glycolipids, colominic acid and synthetic substrates.. The enzyme catalyses a ganglioside GM3 + H2O = a beta-D-galactosyl-(1-&gt;4)-beta-D-glucosyl-(1&lt;-&gt;1)-ceramide + N-acetylneuraminate. The catalysed reaction is a ganglioside GM3 (d18:1(4E)) + H2O = a beta-D-Gal-(1-&gt;4)-beta-D-Glc-(1&lt;-&gt;1)-Cer(d18:1(4E)) + N-acetylneuraminate. It carries out the reaction a ganglioside GM2 + H2O = a ganglioside GA2 + N-acetylneuraminate. It catalyses the reaction a ganglioside GM2 (d18:1(4E)) + H2O = a ganglioside GA2 (d18:1(4E)) + N-acetylneuraminate. The enzyme catalyses a ganglioside GD1a + H2O = a ganglioside GM1 + N-acetylneuraminate. The catalysed reaction is a ganglioside GD1a (d18:1(4E)) + H2O = a ganglioside GM1 (d18:1(4E)) + N-acetylneuraminate. It carries out the reaction a ganglioside GD3 + H2O = a ganglioside GM3 + N-acetylneuraminate. It catalyses the reaction a ganglioside GD3 (d18:1(4E)) + H2O = a ganglioside GM3 (d18:1(4E)) + N-acetylneuraminate. Its function is as follows. Exo-alpha-sialidase that catalyzes the hydrolytic cleavage of the terminal sialic acid (N-acetylneuraminic acid, Neu5Ac) of a glycan moiety in the catabolism of glycolipids, glycoproteins and oligosacharides. Efficiently hydrolyzes gangliosides including alpha-(2-&gt;3)-sialylated GD1a and GM3 and alpha-(2-&gt;8)-sialylated GD3. Hydrolyzes poly-alpha-(2-&gt;8)-sialylated neural cell adhesion molecule NCAM1 likely at growth cones, suppressing neurite outgrowth in hippocampal neurons. May desialylate sialyl Lewis A and X antigens at the cell surface, down-regulating these glycan epitopes recognized by SELE/E selectin in the initiation of cell adhesion and extravasation. Has sialidase activity toward mucin, fetuin and sialyllactose. This Mus musculus (Mouse) protein is Sialidase-4 (Neu4).